A 589-amino-acid chain; its full sequence is Serine/threonine-protein phosphatase 2A 65 kDa regulatory subunit A alpha isoform (589 aa).

Ala-2 bears the N-acetylalanine mark. HEAT repeat units follow at residues 8–46 (DSLY…GVER), 47–84 (TRSE…GGPE), 85–123 (YVHC…SPSD), 124–161 (LEAH…VSSA), 162–200 (VKAE…ELDN), 201–239 (VKSE…PQED), 240–278 (LEAL…GPEI), 279–321 (TKTD…RENV), 322–360 (IMTQ…GKDN), 361–399 (TIEH…GIRQ), 400–438 (LSQS…GVEF), 439–477 (FDEK…GKEW), 478–516 (AHAT…GQDI), 517–555 (TTKH…DNST), and 556–589 (LQSE…LSLA). Lys-280 carries the post-translational modification N6-acetyllysine.

This sequence belongs to the phosphatase 2A regulatory subunit A family. As to quaternary structure, PP2A consists of a common heterodimeric core enzyme, composed of PPP2CA a 36 kDa catalytic subunit (subunit C) and PPP2R1A a 65 kDa constant regulatory subunit (PR65 or subunit A), that associates with a variety of regulatory subunits. Proteins that associate with the core dimer include three families of regulatory subunits B (the R2/B/PR55/B55, R3/B''/PR72/PR130/PR59 and R5/B'/B56 families), the 48 kDa variable regulatory subunit, viral proteins, and cell signaling molecules. Found in a complex with at least ARL2, PPP2CB, PPP2R1A, PPP2R2A, PPP2R5E and TBCD. Interacts with the PP2A C catalytic subunit PPP2CA. Interacts with the PP2A B subunit PPP2R2A. Interacts with the PP2A B subunit PPP2R5D. Interacts with FOXO1; the interaction dephosphorylates FOXO1 on AKT-mediated phosphorylation sites. Interacts with IPO9. Interacts with TP53 and SGO1. Interacts with PLA2G16; this interaction might decrease PP2A activity. Interacts with CTTNBP2NL. Interacts with GNA12; the interaction promotes protein phosphatase 2A activation causing dephosphorylation of MAPT. Interacts with CIP2A; this interaction stabilizes CIP2A. Interacts with PABIR1/FAM122A. Interacts with ADCY8; antagonizes interaction between ADCY8 and calmodulin. Interacts with CRTC3 (when phosphorylated at 'Ser-391'). Interacts with SPRY2. Part of the core of STRIPAK complexes composed of PP2A catalytic and scaffolding subunits, the striatins (PP2A regulatory subunits), the striatin-associated proteins MOB4, STRIP1 and STRIP2, PDCD10 and members of the STE20 kinases, such as STK24 and STK26. Component of the Integrator-PP2A (INTAC) complex, composed of the Integrator core complex and protein phosphatase 2A subunits PPP2CA and PPP2R1A.

The protein resides in the cytoplasm. It is found in the nucleus. It localises to the chromosome. The protein localises to the centromere. Its subcellular location is the lateral cell membrane. The protein resides in the cell projection. It is found in the dendrite. Its function is as follows. The PR65 subunit of protein phosphatase 2A serves as a scaffolding molecule to coordinate the assembly of the catalytic subunit and a variable regulatory B subunit. Upon interaction with GNA12 promotes dephosphorylation of microtubule associated protein TAU/MAPT. Required for proper chromosome segregation and for centromeric localization of SGO1 in mitosis. Together with RACK1 adapter, mediates dephosphorylation of AKT1 at 'Ser-473', preventing AKT1 activation and AKT-mTOR signaling pathway. Dephosphorylation of AKT1 is essential for regulatory T-cells (Treg) homeostasis and stability. Part of the striatin-interacting phosphatase and kinase (STRIPAK) complexes. STRIPAK complexes have critical roles in protein (de)phosphorylation and are regulators of multiple signaling pathways including Hippo, MAPK, nuclear receptor and cytoskeleton remodeling. Different types of STRIPAK complexes are involved in a variety of biological processes such as cell growth, differentiation, apoptosis, metabolism and immune regulation. Key mediator of a quality checkpoint during transcription elongation as part of the Integrator-PP2A (INTAC) complex. The INTAC complex drives premature transcription termination of transcripts that are unfavorably configured for transcriptional elongation: within the INTAC complex, acts as a scaffolding subunit for PPP2CA, which catalyzes dephosphorylation of the C-terminal domain (CTD) of Pol II subunit POLR2A/RPB1 and SUPT5H/SPT5, thereby preventing transcriptional elongation. Regulates the recruitment of the SKA complex to kinetochores. The sequence is that of Serine/threonine-protein phosphatase 2A 65 kDa regulatory subunit A alpha isoform (Ppp2r1a) from Mus musculus (Mouse).